The primary structure comprises 70 residues: Small ribosomal subunit protein bS21 (70 aa).

Belongs to the bacterial ribosomal protein bS21 family.

The protein is Small ribosomal subunit protein bS21 (rpsU) of Helicobacter pylori (strain J99 / ATCC 700824) (Campylobacter pylori J99).